Here is a 361-residue protein sequence, read N- to C-terminus: Aminomethyltransferase (361 aa).

This sequence belongs to the GcvT family. The glycine cleavage system is composed of four proteins: P, T, L and H.

It carries out the reaction N(6)-[(R)-S(8)-aminomethyldihydrolipoyl]-L-lysyl-[protein] + (6S)-5,6,7,8-tetrahydrofolate = N(6)-[(R)-dihydrolipoyl]-L-lysyl-[protein] + (6R)-5,10-methylene-5,6,7,8-tetrahydrofolate + NH4(+). The glycine cleavage system catalyzes the degradation of glycine. The protein is Aminomethyltransferase of Bacteroides fragilis (strain ATCC 25285 / DSM 2151 / CCUG 4856 / JCM 11019 / LMG 10263 / NCTC 9343 / Onslow / VPI 2553 / EN-2).